Here is a 316-residue protein sequence, read N- to C-terminus: MTKPPLTLYLAAPRGFCAGVDRAIKIVELALDKWGAPVYVRHEIVHNKFVVDGLRAKGAIFVEELSECPDDRPVIFSAHGVPKSVPTAAQARNLVYVDATCPLVSKVHIEAQRHADNGLQMIMIGHAGHPETVGTMGQLPEGEVLLVETPEDVATVKVRDPAKLAYVTQTTLSVDDTADVVHALQQRFPLIVGPHKEDICYATTNRQEAVKAMAPKCDAMLVVGAPNSSNSRRLVEVGARAGCQYAQLVQRATDIDWRALDGISSIGITAGASAPEVLINEVIAAFDAHYDVTQEVVETAVENVEFKVPRVLREPA.

Cysteine 17 is a binding site for [4Fe-4S] cluster. 2 residues coordinate (2E)-4-hydroxy-3-methylbut-2-enyl diphosphate: histidine 46 and histidine 79. Positions 46 and 79 each coordinate dimethylallyl diphosphate. Positions 46 and 79 each coordinate isopentenyl diphosphate. [4Fe-4S] cluster is bound at residue cysteine 101. Histidine 129 contacts (2E)-4-hydroxy-3-methylbut-2-enyl diphosphate. Position 129 (histidine 129) interacts with dimethylallyl diphosphate. Histidine 129 is an isopentenyl diphosphate binding site. Catalysis depends on glutamate 131, which acts as the Proton donor. Threonine 170 lines the (2E)-4-hydroxy-3-methylbut-2-enyl diphosphate pocket. Cysteine 200 is a [4Fe-4S] cluster binding site. 4 residues coordinate (2E)-4-hydroxy-3-methylbut-2-enyl diphosphate: serine 228, serine 229, asparagine 230, and serine 273. Positions 228, 229, 230, and 273 each coordinate dimethylallyl diphosphate. 4 residues coordinate isopentenyl diphosphate: serine 228, serine 229, asparagine 230, and serine 273.

Belongs to the IspH family. It depends on [4Fe-4S] cluster as a cofactor.

It carries out the reaction isopentenyl diphosphate + 2 oxidized [2Fe-2S]-[ferredoxin] + H2O = (2E)-4-hydroxy-3-methylbut-2-enyl diphosphate + 2 reduced [2Fe-2S]-[ferredoxin] + 2 H(+). The enzyme catalyses dimethylallyl diphosphate + 2 oxidized [2Fe-2S]-[ferredoxin] + H2O = (2E)-4-hydroxy-3-methylbut-2-enyl diphosphate + 2 reduced [2Fe-2S]-[ferredoxin] + 2 H(+). The protein operates within isoprenoid biosynthesis; dimethylallyl diphosphate biosynthesis; dimethylallyl diphosphate from (2E)-4-hydroxy-3-methylbutenyl diphosphate: step 1/1. It participates in isoprenoid biosynthesis; isopentenyl diphosphate biosynthesis via DXP pathway; isopentenyl diphosphate from 1-deoxy-D-xylulose 5-phosphate: step 6/6. Its function is as follows. Catalyzes the conversion of 1-hydroxy-2-methyl-2-(E)-butenyl 4-diphosphate (HMBPP) into a mixture of isopentenyl diphosphate (IPP) and dimethylallyl diphosphate (DMAPP). Acts in the terminal step of the DOXP/MEP pathway for isoprenoid precursor biosynthesis. This Roseobacter denitrificans (strain ATCC 33942 / OCh 114) (Erythrobacter sp. (strain OCh 114)) protein is 4-hydroxy-3-methylbut-2-enyl diphosphate reductase.